The chain runs to 475 residues: Putative aldehyde dehydrogenase (475 aa).

NAD(+)-binding positions include 146-147 and 223-224; these read WN and GS. The active-site Proton acceptor is glutamate 245. An NAD(+)-binding site is contributed by leucine 246. Cysteine 279 acts as the Nucleophile in catalysis. Residue glutamate 379 participates in NAD(+) binding.

This sequence belongs to the aldehyde dehydrogenase family.

The enzyme catalyses an aldehyde + NAD(+) + H2O = a carboxylate + NADH + 2 H(+). The sequence is that of Putative aldehyde dehydrogenase from Staphylococcus aureus (strain bovine RF122 / ET3-1).